The following is a 187-amino-acid chain: Alpha-D-galactose-binding lectin (187 aa).

The N-terminal stretch at 1–37 (MTFAKQSCFNSIILLSIATSYFKIGHKISELGNRIEK) is a signal peptide. Threonine 39 is subject to N-acetylthreonine. Residues 53–56 (HPKG), aspartate 64, 72–76 (DIHER), histidine 101, glycine 104, glutamate 112, 120–122 (DRH), histidine 145, glycine 148, glutamate 156, and 164–166 (DKH) contribute to the N-acetyl-alpha-D-galactosamine site.

As to quaternary structure, homodimer. As to expression, highest expression in the posterior part of the mantle. Highly expressed in gills and to a lesser extent in mid mantle and anterior muscle. Lowest expression in digestive gland and posterior adductor muscle. Scarcely detectable in hemocytes.

With respect to regulation, agglutination of E.coli is inhibited by alpha-galactoside melibiose, but not by beta-galactoside lactose. Alpha-D-galactose-binding lectin. Binds D-GalNAc, but not glucose or its derivatives. Has hemagglutinating activity towards rabbit erythrocytes. Agglutinates bacteria. Has bacteriostatic activity on both Gram-positive and Gram-negative bacteria including B.subtilis, S.aureus, E.coli and V.parahaemolyticus, respectively. Has a dose-dependent cytotoxic effect on the human globotriaosylceramide (Gb3)-expressing Epstein-Barr virus (EBV)-positive Burkitt's lymphoma (Raji) cell line. Has dose-dependent cytotoxic effect on another Burkitt's lymphoma (Ramos) cell line, which does not possess the EBV genome, but also expresses Gb3. Binds to Gb3 in these cells leading to phosphorylation of MEK1/2, ERK1/2, JNK and p38 kinase, activation of caspase-9/3 and to expression of p21 and tumor necrosis factor (TNF)-alpha. No cytotoxic effect on the human chronic myelogenous leukemia (K-562) cell line, which does not express Gb3. May be involved in innate immunity acting as an antibacterial or antifungal agent. May be a pattern recognition receptor (PRR) involved in recognition of glycans found on parasitic or symbiotic microorganisms. The protein is Alpha-D-galactose-binding lectin of Mytilus galloprovincialis (Mediterranean mussel).